Here is a 255-residue protein sequence, read N- to C-terminus: Small ribosomal subunit protein eS1 (255 aa).

Residues 1 to 18 (MAVGKNKRLSKGKKGLKK) are compositionally biased toward basic residues. The segment at 1–28 (MAVGKNKRLSKGKKGLKKRTQDPFSRKD) is disordered. The residue at position 2 (alanine 2) is an N-acetylalanine; partial. Over residues 19–28 (RTQDPFSRKD) the composition is skewed to basic and acidic residues.

It belongs to the eukaryotic ribosomal protein eS1 family. Component of the small ribosomal subunit. Mature ribosomes consist of a small (40S) and a large (60S) subunit. The 40S subunit contains about 33 different proteins and 1 molecule of RNA (18S). The 60S subunit contains about 49 different proteins and 3 molecules of RNA (25S, 5.8S and 5S).

It localises to the cytoplasm. In Ajellomyces dermatitidis (strain ER-3 / ATCC MYA-2586) (Blastomyces dermatitidis), this protein is Small ribosomal subunit protein eS1.